The sequence spans 207 residues: Proteasome subunit beta 1 (207 aa).

A propeptide spans 1-9 (removed in mature form; by autocatalysis); it reads MWALDKIKG. Thr10 acts as the Nucleophile in catalysis.

It belongs to the peptidase T1B family. In terms of assembly, the 20S proteasome core is composed of 14 alpha and 14 beta subunits that assemble into four stacked heptameric rings, resulting in a barrel-shaped structure. The two inner rings, each composed of seven catalytic beta subunits, are sandwiched by two outer rings, each composed of seven alpha subunits. The catalytic chamber with the active sites is on the inside of the barrel. Has a gated structure, the ends of the cylinder being occluded by the N-termini of the alpha-subunits. Is capped at one or both ends by the proteasome regulatory ATPase, PAN.

It is found in the cytoplasm. The enzyme catalyses Cleavage of peptide bonds with very broad specificity.. Its activity is regulated as follows. The formation of the proteasomal ATPase PAN-20S proteasome complex, via the docking of the C-termini of PAN into the intersubunit pockets in the alpha-rings, triggers opening of the gate for substrate entry. Interconversion between the open-gate and close-gate conformations leads to a dynamic regulation of the 20S proteasome proteolysis activity. Functionally, component of the proteasome core, a large protease complex with broad specificity involved in protein degradation. This is Proteasome subunit beta 1 from Thermococcus sibiricus (strain DSM 12597 / MM 739).